A 445-amino-acid chain; its full sequence is Tubby-like F-box protein 10 (445 aa).

The F-box domain occupies 57–112; it reads SRWANLPPELLFDVIKRLEESESNWPARKHVVACASVCRSWRAMCQEIVLGPEICG. The span at 382 to 398 shows a compositional bias: low complexity; that stretch reads PQPQGTGAAAAPTSAPA. A disordered region spans residues 382 to 401; it reads PQPQGTGAAAAPTSAPAHPE.

Belongs to the TUB family. Part of a SCF (ASK-cullin-F-box) protein ligase complex. Interacts with SKP1A/ASK1. Ubiquitous.

It is found in the nucleus. Its pathway is protein modification; protein ubiquitination. In terms of biological role, component of SCF(ASK-cullin-F-box) E3 ubiquitin ligase complexes, which may mediate the ubiquitination and subsequent proteasomal degradation of target proteins. In Arabidopsis thaliana (Mouse-ear cress), this protein is Tubby-like F-box protein 10.